The following is a 472-amino-acid chain: Mothers against decapentaplegic homolog 1 (472 aa).

One can recognise an MH1 domain in the interval 12 to 136 (PAVKRLLGWK…YKRVDSPVLP (125 aa)). Zn(2+)-binding residues include C64, C109, C121, and H126. The segment at 158-238 (NPLHQTEPPM…PPPAYMPPEE (81 aa)) is disordered. The span at 169-182 (QNATFPDSFPQQPA) shows a compositional bias: polar residues. Low complexity predominate over residues 188–226 (TPNSPTNSYPSSPNSGTGSTATFPHSPSSSDPGSPFQMP). Over residues 227–238 (ETPPPAYMPPEE) the composition is skewed to pro residues. The 195-residue stretch at 278–472 (WCSIVYYELN…SPHNPISSVS (195 aa)) folds into the MH2 domain.

This sequence belongs to the dwarfin/SMAD family. As to quaternary structure, may form trimers with another Smad1 and the co-Smad Smad4.

The protein resides in the cytoplasm. It is found in the nucleus. Functionally, involved in ventralization. May mediate Bmp2b signaling during embryonic dorsal-ventral pattern formation, and may itself be a transcriptional target for Smad5-mediated Bmp2b signaling. The polypeptide is Mothers against decapentaplegic homolog 1 (smad1) (Danio rerio (Zebrafish)).